Here is a 499-residue protein sequence, read N- to C-terminus: Maturase K (499 aa).

The protein belongs to the intron maturase 2 family. MatK subfamily.

Its subcellular location is the plastid. It is found in the chloroplast. Its function is as follows. Usually encoded in the trnK tRNA gene intron. Probably assists in splicing its own and other chloroplast group II introns. The chain is Maturase K from Chamaecrista fasciculata (Showy partridge pea).